The primary structure comprises 1535 residues: Protein artichoke (1535 aa).

The first 19 residues, 1 to 19, serve as a signal peptide directing secretion; that stretch reads MMLLPIFLLLCIGINLIRA. LRR repeat units lie at residues 64 to 87, 89 to 110, 112 to 135, 136 to 157, 158 to 181, 183 to 206, 207 to 230, 231 to 256, 257 to 280, 281 to 304, 306 to 328, 331 to 356, 357 to 380, 382 to 404, 406 to 429, 430 to 452, 453 to 476, 478 to 500, 521 to 545, 548 to 571, 573 to 595, 597 to 619, 620 to 643, 645 to 667, 669 to 691, 692 to 714, 716 to 738, 739 to 762, 764 to 786, 788 to 810, 811 to 834, 835 to 858, 860 to 882, and 883 to 906; these read KGRI…FFGS, QIVR…WLNE, ENGL…SLNG, MINM…DFSG, LLSL…LFRH, PKLQ…LFDG, LISL…ALSR, LPNL…IVKD, LEHL…SFVD, LPNL…AFLR, PQLK…SLLQ, GSGV…LLDA, LPRL…ALRG, GTLE…ALMA, PALR…FWNL, PGLK…LLAG, LPSL…SFRH, PLLE…TLIH, LPRI…ASKD, LPNL…GFQG, MELR…SFIG, QRLE…ALLP, LAEL…FFSN, SRLE…AFDT, RSLE…LGNL, NNLR…VIGG, RNVV…TFRN, LPKL…ALKG, DELQ…VFEE, PSLL…SFHN, ANSL…GLRS, MRNL…PLKA, NWLV…PFET, and MPRL…TFRN. Positions 919 to 963 constitute an LRRCT domain; that stretch reads NPIDCNCEMQWLSVWLQETNFPYPGPKCQDGRLLRSARMERSLCV. Disordered stretches follow at residues 1036-1055, 1253-1331, 1377-1416, and 1429-1449; these read HSAI…NSNI, TQAR…DSQY, VTTT…GRST, and AQPT…EGVA. The span at 1253–1270 shows a compositional bias: polar residues; that stretch reads TQARPKPTKSSGESSETA. 2 stretches are compositionally biased toward low complexity: residues 1271-1285 and 1293-1315; these read TYEV…TTTT and TSTT…TQVT. Polar residues-rich tracts occupy residues 1316–1328 and 1377–1391; these read PAEN…TELD and VTTT…NQVT. Pro residues predominate over residues 1398–1407; sequence TVPPPPPASP.

The protein localises to the secreted. Its subcellular location is the extracellular space. The protein resides in the extracellular matrix. It is found in the cytoplasm. In terms of biological role, required for normal morphology and function of ciliated sensory organs. The sequence is that of Protein artichoke from Drosophila melanogaster (Fruit fly).